A 525-amino-acid polypeptide reads, in one-letter code: FNIP repeat-containing protein DDB_G0274617 (525 aa).

One copy of the FNIP repeat lies at Tyr-65 to Tyr-107.

The protein is FNIP repeat-containing protein DDB_G0274617 of Dictyostelium discoideum (Social amoeba).